The primary structure comprises 532 residues: Collagen alpha-1(XXIII) chain (532 aa).

The Cytoplasmic portion of the chain corresponds to 1–23 (MGAGERAAGGGGTQDPGAGCGAR). Residues 24 to 45 (ALGALCLLLSVGSATACLLLGA) form a helical; Signal-anchor for type II membrane protein membrane-spanning segment. At 46 to 532 (QAAALHGRVA…GLPVPGCWHK (487 aa)) the chain is on the extracellular side. A disordered region spans residues 102-532 (PSECICPPGP…GLPVPGCWHK (431 aa)). 4 consecutive Collagen-like domains span residues 108–163 (PPGP…FGPR), 173–232 (GPPG…PGKK), 242–297 (GLPG…EQGD), and 313–372 (GPPG…MGLS). Composition is skewed to low complexity over residues 129–145 (QSGR…DGKP) and 157–172 (PGDF…DGAA). Pro residues-rich tracts occupy residues 174-184 (PPGPPGPPGAR), 241-250 (PGLPGPPGPK), and 314-326 (PPGP…PPGI). Composition is skewed to basic and acidic residues over residues 342–354 (DGEK…KGDP) and 380–393 (PKGE…DHLQ). Residues 403 to 414 (PGPPGPPGPPGP) are compositionally biased toward pro residues. 2 Collagen-like domains span residues 404-452 (GPPG…GPPG) and 455-514 (GLPG…PGLD). 2 stretches are compositionally biased toward basic and acidic residues: residues 427 to 441 (DGAK…ERGP) and 478 to 495 (RGEK…ERGV).

Homotrimer. Post-translationally, undergoes proteolytic cleavage by furin protease to yield a 60 kDa soluble form that forms a homotrimer and exhibits a low affinity interaction with heparin.

Its subcellular location is the cell membrane. This is Collagen alpha-1(XXIII) chain (Col23a1) from Rattus norvegicus (Rat).